The primary structure comprises 157 residues: Globin (157 aa).

G1 is subject to N-acetylglycine. The 148-residue stretch at 8-155 folds into the Globin domain; it reads SLSADQKAAI…MANIIDAEQK (148 aa). Heme b contacts are provided by H70 and H102.

Belongs to the globin family. As to quaternary structure, monomer.

The chain is Globin from Nerita albicilla (Ox-palate nerite).